Here is a 120-residue protein sequence, read N- to C-terminus: NAD(P)H-quinone oxidoreductase subunit 3 (120 aa).

Transmembrane regions (helical) follow at residues 10-30, 64-84, and 89-109; these read LLVFLIVCSLLPILALGASAL, MFALVFVIFDVETVFLYPWAV, and LGLLAFVEALIFIAILVVGLV.

It belongs to the complex I subunit 3 family. In terms of assembly, NDH-1 can be composed of about 15 different subunits; different subcomplexes with different compositions have been identified which probably have different functions.

It is found in the cellular thylakoid membrane. It catalyses the reaction a plastoquinone + NADH + (n+1) H(+)(in) = a plastoquinol + NAD(+) + n H(+)(out). The enzyme catalyses a plastoquinone + NADPH + (n+1) H(+)(in) = a plastoquinol + NADP(+) + n H(+)(out). In terms of biological role, NDH-1 shuttles electrons from an unknown electron donor, via FMN and iron-sulfur (Fe-S) centers, to quinones in the respiratory and/or the photosynthetic chain. The immediate electron acceptor for the enzyme in this species is believed to be plastoquinone. Couples the redox reaction to proton translocation, and thus conserves the redox energy in a proton gradient. Cyanobacterial NDH-1 also plays a role in inorganic carbon-concentration. This Synechococcus sp. (strain JA-2-3B'a(2-13)) (Cyanobacteria bacterium Yellowstone B-Prime) protein is NAD(P)H-quinone oxidoreductase subunit 3.